Reading from the N-terminus, the 142-residue chain is HTH-type transcriptional regulator MntR (142 aa).

The region spanning 1 to 63 is the HTH dtxR-type domain; the sequence is MPTPSMEDYI…YEKYRGLVLT (63 aa). Asp8, Glu11, His77, Glu99, Glu102, and His103 together coordinate Mn(2+).

The protein belongs to the DtxR/MntR family. As to quaternary structure, homodimer.

It is found in the cytoplasm. Its activity is regulated as follows. DNA binding is strongly activated by Mn(2+). Its function is as follows. Central regulator of manganese homeostasis. The polypeptide is HTH-type transcriptional regulator MntR (Bacillus cereus (strain AH820)).